Here is a 98-residue protein sequence, read N- to C-terminus: Large ribosomal subunit protein bL25 (98 aa).

The interval 1 to 22 (MANFVLNATARNEDKQGKGASR) is disordered.

Belongs to the bacterial ribosomal protein bL25 family. Part of the 50S ribosomal subunit; part of the 5S rRNA/L5/L18/L25 subcomplex. Contacts the 5S rRNA. Binds to the 5S rRNA independently of L5 and L18.

Functionally, this is one of the proteins that binds to the 5S RNA in the ribosome where it forms part of the central protuberance. The protein is Large ribosomal subunit protein bL25 of Acinetobacter baylyi (strain ATCC 33305 / BD413 / ADP1).